Here is a 293-residue protein sequence, read N- to C-terminus: Small ribosomal subunit biogenesis GTPase RsgA (293 aa).

The region spanning 63–223 (KNELVRPPIA…VADTPGFSSL (161 aa)) is the CP-type G domain. GTP contacts are provided by residues 112–115 (SKMD) and 166–174 (GQSGVGKSS). Zn(2+) contacts are provided by Cys247, Cys252, His254, and Cys260.

This sequence belongs to the TRAFAC class YlqF/YawG GTPase family. RsgA subfamily. In terms of assembly, monomer. Associates with 30S ribosomal subunit, binds 16S rRNA. Requires Zn(2+) as cofactor.

The protein resides in the cytoplasm. In terms of biological role, one of several proteins that assist in the late maturation steps of the functional core of the 30S ribosomal subunit. Helps release RbfA from mature subunits. May play a role in the assembly of ribosomal proteins into the subunit. Circularly permuted GTPase that catalyzes slow GTP hydrolysis, GTPase activity is stimulated by the 30S ribosomal subunit. In Bacillus cereus (strain ATCC 14579 / DSM 31 / CCUG 7414 / JCM 2152 / NBRC 15305 / NCIMB 9373 / NCTC 2599 / NRRL B-3711), this protein is Small ribosomal subunit biogenesis GTPase RsgA.